A 272-amino-acid polypeptide reads, in one-letter code: 3-methyl-2-oxobutanoate hydroxymethyltransferase (272 aa).

Asp42 and Asp86 together coordinate Mg(2+). Residues 42–43 (DS), Asp86, and Lys116 each bind 3-methyl-2-oxobutanoate. Glu118 serves as a coordination point for Mg(2+). Glu185 functions as the Proton acceptor in the catalytic mechanism. The disordered stretch occupies residues 251 to 272 (LKEQRDQRATPTTPPPPPAPDC). The segment covering 262 to 272 (TTPPPPPAPDC) has biased composition (pro residues).

The protein belongs to the PanB family. As to quaternary structure, homodecamer; pentamer of dimers. The cofactor is Mg(2+).

It is found in the cytoplasm. The enzyme catalyses 3-methyl-2-oxobutanoate + (6R)-5,10-methylene-5,6,7,8-tetrahydrofolate + H2O = 2-dehydropantoate + (6S)-5,6,7,8-tetrahydrofolate. Its pathway is cofactor biosynthesis; (R)-pantothenate biosynthesis; (R)-pantoate from 3-methyl-2-oxobutanoate: step 1/2. Its function is as follows. Catalyzes the reversible reaction in which hydroxymethyl group from 5,10-methylenetetrahydrofolate is transferred onto alpha-ketoisovalerate to form ketopantoate. The polypeptide is 3-methyl-2-oxobutanoate hydroxymethyltransferase (Synechococcus sp. (strain CC9311)).